Reading from the N-terminus, the 326-residue chain is Malate dehydrogenase (326 aa).

11–17 (GAAGQIG) serves as a coordination point for NAD(+). Substrate-binding residues include Arg-92 and Arg-98. NAD(+)-binding positions include Asn-105, Gln-112, and 129 to 131 (VGN). Residues Asn-131 and Arg-162 each coordinate substrate. The Proton acceptor role is filled by His-187.

The protein belongs to the LDH/MDH superfamily. MDH type 2 family.

It carries out the reaction (S)-malate + NAD(+) = oxaloacetate + NADH + H(+). Functionally, catalyzes the reversible oxidation of malate to oxaloacetate. The protein is Malate dehydrogenase of Alkalilimnicola ehrlichii (strain ATCC BAA-1101 / DSM 17681 / MLHE-1).